Reading from the N-terminus, the 409-residue chain is Dual-specificity RNA methyltransferase RlmN (409 aa).

The active-site Proton acceptor is Glu117. The 250-residue stretch at Leu128–Asp377 folds into the Radical SAM core domain. An intrachain disulfide couples Cys135 to Cys382. [4Fe-4S] cluster-binding residues include Cys142, Cys146, and Cys149. S-adenosyl-L-methionine contacts are provided by residues Gly205 to Glu206, Ser237, Ser259 to His261, and Asn339. Cys382 functions as the S-methylcysteine intermediate in the catalytic mechanism.

It belongs to the radical SAM superfamily. RlmN family. [4Fe-4S] cluster is required as a cofactor.

It localises to the cytoplasm. It catalyses the reaction adenosine(2503) in 23S rRNA + 2 reduced [2Fe-2S]-[ferredoxin] + 2 S-adenosyl-L-methionine = 2-methyladenosine(2503) in 23S rRNA + 5'-deoxyadenosine + L-methionine + 2 oxidized [2Fe-2S]-[ferredoxin] + S-adenosyl-L-homocysteine. The enzyme catalyses adenosine(37) in tRNA + 2 reduced [2Fe-2S]-[ferredoxin] + 2 S-adenosyl-L-methionine = 2-methyladenosine(37) in tRNA + 5'-deoxyadenosine + L-methionine + 2 oxidized [2Fe-2S]-[ferredoxin] + S-adenosyl-L-homocysteine. Its function is as follows. Specifically methylates position 2 of adenine 2503 in 23S rRNA and position 2 of adenine 37 in tRNAs. m2A2503 modification seems to play a crucial role in the proofreading step occurring at the peptidyl transferase center and thus would serve to optimize ribosomal fidelity. This Psychrobacter arcticus (strain DSM 17307 / VKM B-2377 / 273-4) protein is Dual-specificity RNA methyltransferase RlmN.